The sequence spans 382 residues: Alkanesulfonate monooxygenase (382 aa).

This sequence belongs to the SsuD family. Homotetramer.

It carries out the reaction an alkanesulfonate + FMNH2 + O2 = an aldehyde + FMN + sulfite + H2O + 2 H(+). Functionally, catalyzes the desulfonation of aliphatic sulfonates. The polypeptide is Alkanesulfonate monooxygenase (Serratia proteamaculans (strain 568)).